We begin with the raw amino-acid sequence, 148 residues long: SsrA-binding protein (148 aa).

Residues Glu-129–Ala-148 are disordered.

This sequence belongs to the SmpB family.

The protein localises to the cytoplasm. Its function is as follows. Required for rescue of stalled ribosomes mediated by trans-translation. Binds to transfer-messenger RNA (tmRNA), required for stable association of tmRNA with ribosomes. tmRNA and SmpB together mimic tRNA shape, replacing the anticodon stem-loop with SmpB. tmRNA is encoded by the ssrA gene; the 2 termini fold to resemble tRNA(Ala) and it encodes a 'tag peptide', a short internal open reading frame. During trans-translation Ala-aminoacylated tmRNA acts like a tRNA, entering the A-site of stalled ribosomes, displacing the stalled mRNA. The ribosome then switches to translate the ORF on the tmRNA; the nascent peptide is terminated with the 'tag peptide' encoded by the tmRNA and targeted for degradation. The ribosome is freed to recommence translation, which seems to be the essential function of trans-translation. This chain is SsrA-binding protein, found in Ralstonia nicotianae (strain ATCC BAA-1114 / GMI1000) (Ralstonia solanacearum).